Here is a 144-residue protein sequence, read N- to C-terminus: Large ribosomal subunit protein uL16 (144 aa).

The protein belongs to the universal ribosomal protein uL16 family. In terms of assembly, part of the 50S ribosomal subunit.

Its function is as follows. Binds 23S rRNA and is also seen to make contacts with the A and possibly P site tRNAs. This chain is Large ribosomal subunit protein uL16, found in Heliobacterium modesticaldum (strain ATCC 51547 / Ice1).